A 480-amino-acid polypeptide reads, in one-letter code: Transmembrane protein 161A (480 aa).

A signal peptide spans 1-28; the sequence is MAVLGVQLVVTLFTATLMHRLAPHCSFA. The Extracellular portion of the chain corresponds to 29 to 98; sequence RWLLCNGSLF…LTAVDALVLR (70 aa). A glycan (N-linked (GlcNAc...) asparagine) is linked at Asn34. The helical transmembrane segment at 99–119 threads the bilayer; the sequence is FFLEYQWFVDFAVYSVGVYLF. The Cytoplasmic portion of the chain corresponds to 120-134; the sequence is TEAYYFVLGPVQETN. Residues 135–155 traverse the membrane as a helical segment; sequence IAVFWCLLTLAFSLKVFLMVT. Topologically, residues 156–166 are extracellular; that stretch reads RLYFSTKEGGE. A helical membrane pass occupies residues 167–187; sequence RSVCLSFAFLFLLLAMLVQVV. Topologically, residues 188 to 224 are cytoplasmic; that stretch reads REETLELGLEPGLASMTQHLEPILKKQDWDWTLPVIK. Residues 225–245 form a helical membrane-spanning segment; it reads LAIRLGLAVLGSLLGAFLIFP. Residues 246 to 263 are Extracellular-facing; the sequence is GLRLAQTHQDALTLSADR. Residues 264–284 traverse the membrane as a helical segment; that stretch reads PLLQLLLHTSFLSPLCTLWLW. The Cytoplasmic portion of the chain corresponds to 285–304; the sequence is TKPVARDFLYQAPTRNMTFS. Residues 305 to 325 traverse the membrane as a helical segment; that stretch reads VPSEGAFDSLRLWVLVALCLL. Residues 326-370 lie on the Extracellular side of the membrane; that stretch reads RLAVTRPHLQAYLCLAKARVEQLRKEAGRIEAREIQQRVVRVYCY. The helical transmembrane segment at 371–391 threads the bilayer; the sequence is VTVVSLQYLTPLILTLHCTLL. Residues 392–450 lie on the Cytoplasmic side of the membrane; sequence LKTLGGYSWALSSTPPPLAPSQPSEALIPVDPAGDEAQQTAAQVAGILGGLLTPLFLRG. A helical transmembrane segment spans residues 451–473; the sequence is MLAYIIWWTAACQLLSSLFGLYF. Residues 474 to 480 lie on the Extracellular side of the membrane; the sequence is HQHLAAS.

It belongs to the TMEM161 family.

The protein localises to the membrane. Its function is as follows. May play a role in protection against oxidative stress. Overexpression leads to reduced levels of oxidant-induced DNA damage and apoptosis. The protein is Transmembrane protein 161A (Tmem161a) of Mus musculus (Mouse).